The following is a 110-amino-acid chain: uncharacterized protein (110 aa).

This is an uncharacterized protein from Autographa californica nuclear polyhedrosis virus (AcMNPV).